We begin with the raw amino-acid sequence, 337 residues long: Methylthioribose-1-phosphate isomerase (337 aa).

Residues 51-53, Arg88, and Gln187 contribute to the substrate site; that span reads RGA. Asp228 acts as the Proton donor in catalysis. Substrate is bound at residue 238 to 239; the sequence is NK.

Belongs to the eIF-2B alpha/beta/delta subunits family. MtnA subfamily.

It catalyses the reaction 5-(methylsulfanyl)-alpha-D-ribose 1-phosphate = 5-(methylsulfanyl)-D-ribulose 1-phosphate. It participates in amino-acid biosynthesis; L-methionine biosynthesis via salvage pathway; L-methionine from S-methyl-5-thio-alpha-D-ribose 1-phosphate: step 1/6. Catalyzes the interconversion of methylthioribose-1-phosphate (MTR-1-P) into methylthioribulose-1-phosphate (MTRu-1-P). This Anaeromyxobacter sp. (strain Fw109-5) protein is Methylthioribose-1-phosphate isomerase.